Here is a 376-residue protein sequence, read N- to C-terminus: 5-hydroxytryptamine receptor 1D (376 aa).

Residues 1 to 22 are disordered; it reads MSPPNQSEEGLPQEASNRSLNA. Residues asparagine 5, asparagine 17, and asparagine 21 are each glycosylated (N-linked (GlcNAc...) asparagine). A run of 3 helical transmembrane segments spans residues 39-64, 76-97, and 110-134; these read VSLV…TTIL, LIGS…ISIA, and LCDI…VIAL. Cysteine 111 and cysteine 188 form a disulfide bridge. Positions 118 and 122 each coordinate serotonin. The DRY motif; important for ligand-induced conformation changes motif lies at 135-137; sequence DRY. The next 4 membrane-spanning stretches (helical) occupy residues 155 to 176, 195 to 218, 300 to 325, and 335 to 358; these read AGAM…PLFW, ISYT…ILYS, KTLG…VLPI, and ALFD…YTVF. Serine 320 contributes to the serotonin binding site. The NPxxY motif; important for ligand-induced conformation changes and signaling motif lies at 351–355; it reads NPIIY.

It belongs to the G-protein coupled receptor 1 family. As to quaternary structure, homodimer. Heterodimer with HTR1B.

The protein localises to the cell membrane. Functionally, G-protein coupled receptor for 5-hydroxytryptamine (serotonin). Also functions as a receptor for ergot alkaloid derivatives, various anxiolytic and antidepressant drugs and other psychoactive substances. Ligand binding causes a conformation change that triggers signaling via guanine nucleotide-binding proteins (G proteins) and modulates the activity of downstream effectors, such as adenylate cyclase. HTR1D is coupled to G(i)/G(o) G alpha proteins and mediates inhibitory neurotransmission by inhibiting adenylate cyclase activity. Regulates the release of 5-hydroxytryptamine in the brain, and thereby affects neural activity. May also play a role in regulating the release of other neurotransmitters. May play a role in vasoconstriction. The sequence is that of 5-hydroxytryptamine receptor 1D (HTR1D) from Cavia porcellus (Guinea pig).